The primary structure comprises 602 residues: Cholinesterase (602 aa).

An N-terminal signal peptide occupies residues 1–28 (MHSKVTIICIRFLFWFLLLCMLIGKSHT). Residues Asn-45 and Asn-85 are each glycosylated (N-linked (GlcNAc...) (complex) asparagine). Cys-93 and Cys-120 are oxidised to a cystine. Trp-110 contacts tacrine. An N-linked (GlcNAc...) (complex) asparagine glycan is attached at Asn-134. 144-145 (GG) is a binding site for substrate. The active-site Acyl-ester intermediate is the Ser-226. Ser-226 bears the Phosphoserine mark. N-linked (GlcNAc...) (complex) asparagine glycosylation is found at Asn-269 and Asn-284. Cys-280 and Cys-291 form a disulfide bridge. Glu-353 functions as the Charge relay system in the catalytic mechanism. The N-linked (GlcNAc...) (complex) asparagine glycan is linked to Asn-369. Cys-428 and Cys-547 are joined by a disulfide. Residue His-466 coordinates tacrine. Catalysis depends on His-466, which acts as the Charge relay system. Asn-483 is a glycosylation site (N-linked (GlcNAc...) (complex) asparagine). N-linked (GlcNAc...) asparagine glycans are attached at residues Asn-509, Asn-513, and Asn-514.

It belongs to the type-B carboxylesterase/lipase family. As to quaternary structure, homotetramer; disulfide-linked. Dimer of dimers. N-glycosylated. No other PTM detected. The major N-glycan structures are of the complex diantennary type with 1 and 2 N-acetylneuraminic acid molecules (Neu5Ac) making up approximately 33% and 47% of the total N-glycans, respectively. Only low amounts of fucosylated diantennary N-glycans are detected (approximately 2%). Triantennary N-glycans with or without fucose amount to approximately 13%, whereas 5% of the total N-glycans are of the oligomannosidic or hybrid type. In terms of tissue distribution, detected in blood plasma (at protein level). Present in most cells except erythrocytes.

Its subcellular location is the secreted. The enzyme catalyses an acylcholine + H2O = a carboxylate + choline + H(+). Inhibited by mercury. Inhibited by Tabun. Tabun forms a covalent adduct with Ser-226 that becomes irreversible upon aging. In terms of biological role, esterase with broad substrate specificity. Contributes to the inactivation of the neurotransmitter acetylcholine. Can degrade neurotoxic organophosphate esters. This chain is Cholinesterase (BCHE), found in Homo sapiens (Human).